A 240-amino-acid polypeptide reads, in one-letter code: Zein-alpha M6 (240 aa).

The signal sequence occupies residues 1–21 (MATKIFSLLMLLALSTCVANA).

The protein belongs to the zein family.

Functionally, zeins are major seed storage proteins. The polypeptide is Zein-alpha M6 (Zea mays (Maize)).